A 245-amino-acid polypeptide reads, in one-letter code: 1-(5-phosphoribosyl)-5-[(5-phosphoribosylamino)methylideneamino] imidazole-4-carboxamide isomerase (245 aa).

D7 acts as the Proton acceptor in catalysis. The active-site Proton donor is the D129.

The protein belongs to the HisA/HisF family.

The protein resides in the cytoplasm. It catalyses the reaction 1-(5-phospho-beta-D-ribosyl)-5-[(5-phospho-beta-D-ribosylamino)methylideneamino]imidazole-4-carboxamide = 5-[(5-phospho-1-deoxy-D-ribulos-1-ylimino)methylamino]-1-(5-phospho-beta-D-ribosyl)imidazole-4-carboxamide. It participates in amino-acid biosynthesis; L-histidine biosynthesis; L-histidine from 5-phospho-alpha-D-ribose 1-diphosphate: step 4/9. This Escherichia coli O7:K1 (strain IAI39 / ExPEC) protein is 1-(5-phosphoribosyl)-5-[(5-phosphoribosylamino)methylideneamino] imidazole-4-carboxamide isomerase.